The following is a 66-amino-acid chain: Protein I177L (66 aa).

N-linked (GlcNAc...) asparagine; by host glycosylation occurs at N11.

This sequence belongs to the asfivirus I177L family.

Its subcellular location is the virion. In African swine fever virus (strain Badajoz 1971 Vero-adapted) (Ba71V), this protein is Protein I177L.